An 85-amino-acid chain; its full sequence is Toxin BmKaIT1 (85 aa).

Residues 1–19 form the signal peptide; it reads MNYLVMISFAFLLMTGVES. Positions 21 to 83 constitute an LCN-type CS-alpha/beta domain; the sequence is RDAYIAQNYN…VPIRVPGKCH (63 aa). 4 cysteine pairs are disulfide-bonded: Cys-31–Cys-82, Cys-35–Cys-55, Cys-41–Cys-65, and Cys-45–Cys-67. The propeptide at 84 to 85 is removed by a carboxypeptidase; the sequence is RR.

Belongs to the long (4 C-C) scorpion toxin superfamily. Sodium channel inhibitor family. Alpha subfamily. As to expression, expressed by the venom gland.

The protein resides in the secreted. Alpha toxins bind voltage-independently at site-3 of sodium channels (Nav) and inhibit the inactivation of the activated channels, thereby blocking neuronal transmission. Shows a high toxicity toward insects and moderate toxicity against mammals. The sequence is that of Toxin BmKaIT1 from Olivierus martensii (Manchurian scorpion).